The following is a 602-amino-acid chain: ATP-dependent zinc metalloprotease FtsH 3 (602 aa).

Over 1-18 (MNSWFLQVSKRLGPAGRR) the chain is Cytoplasmic. A helical transmembrane segment spans residues 19 to 39 (LWLLGFMGVVLAVTLGLALRA). Over 40 to 117 (ARESATQRTA…DFASREDPSR (78 aa)) the chain is Periplasmic. Residues 118–138 (AASAVLPVVVLAAVGFALFTV) traverse the membrane as a helical segment. Residues 139 to 602 (SRRRSPKVFS…RRPRPEDQAA (464 aa)) lie on the Cytoplasmic side of the membrane. 202 to 209 (GEPGTGKT) is a binding site for ATP. Histidine 425 contacts Zn(2+). The active site involves glutamate 426. Zn(2+)-binding residues include histidine 429 and aspartate 501.

The protein in the central section; belongs to the AAA ATPase family. In the C-terminal section; belongs to the peptidase M41 family. As to quaternary structure, homohexamer. Requires Zn(2+) as cofactor.

It localises to the cell inner membrane. Functionally, acts as a processive, ATP-dependent zinc metallopeptidase for both cytoplasmic and membrane proteins. Plays a role in the quality control of integral membrane proteins. This is ATP-dependent zinc metalloprotease FtsH 3 from Sorangium cellulosum (strain So ce56) (Polyangium cellulosum (strain So ce56)).